A 209-amino-acid chain; its full sequence is Response regulator protein VraR (209 aa).

The region spanning 4-120 is the Response regulatory domain; that stretch reads KVLFVDDHEM…DIADAVRKTS (117 aa). A 4-aspartylphosphate modification is found at D55. In terms of domain architecture, HTH luxR-type spans 141 to 206; that stretch reads RAELYEMLTE…QAVIYAFQHN (66 aa). The H-T-H motif DNA-binding region spans 165–184; sequence NQEIASASHITIKTVKTHVS.

In terms of assembly, homodimer. Post-translationally, phosphorylated by VraS. Phosphorylation state of VraR controls dimerization of the protein.

Its subcellular location is the cytoplasm. Functionally, member of the two-component regulatory system VraS/VraR involved in the control of the cell wall peptidoglycan biosynthesis. Upon cellular stress, the histidine kinase VraS transfers the phosphoryl group onto VraR. Upon phosphorylation, VraR dimerizes at the N-terminal domain. In turn, phosphorylation-induced dimerization expands and enhances the VraR binding to its own promoter leading to increased expression and subsequent modulation of as many as 40 genes, which ultimately constitute the S.aureus response to cell wall damage. In addition, inhibits the host autophagic flux and delays the early stage of autophagosome formation, thereby promoting bacterial survival. Facilitates the ability of S.aureus to resist host polymorphonuclear leukocytes-mediated phagocytosis and killing thus contributing to immune evasion. The chain is Response regulator protein VraR (vraR) from Staphylococcus aureus (strain Mu3 / ATCC 700698).